Reading from the N-terminus, the 215-residue chain is Variable small protein 6 (215 aa).

The first 18 residues, 1 to 18, serve as a signal peptide directing secretion; it reads MRKRISAIIMTLFMVFMS. C19 carries the N-palmitoyl cysteine lipid modification. C19 carries the S-diacylglycerol cysteine lipid modification.

It belongs to the variable small protein (Vsp) family.

It localises to the cell outer membrane. Its function is as follows. The Vlp and Vsp proteins are antigenically distinct proteins, only one vlp or vsp gene is transcriptionally active at any one time. Switching between these genes is a mechanism of host immune response evasion. This chain is Variable small protein 6, found in Borrelia hermsii.